The following is a 250-amino-acid chain: Acetylglutamate kinase (250 aa).

Residues 41–42 (GG), Arg-63, and Asn-156 contribute to the substrate site.

It belongs to the acetylglutamate kinase family. ArgB subfamily.

It localises to the cytoplasm. It catalyses the reaction N-acetyl-L-glutamate + ATP = N-acetyl-L-glutamyl 5-phosphate + ADP. It functions in the pathway amino-acid biosynthesis; L-arginine biosynthesis; N(2)-acetyl-L-ornithine from L-glutamate: step 2/4. In terms of biological role, catalyzes the ATP-dependent phosphorylation of N-acetyl-L-glutamate. This Listeria monocytogenes serotype 4b (strain CLIP80459) protein is Acetylglutamate kinase.